Reading from the N-terminus, the 296-residue chain is Protoheme IX farnesyltransferase (296 aa).

The Cytoplasmic portion of the chain corresponds to 1–9 (MMFKQYLQV). The chain crosses the membrane as a helical span at residues 10-28 (TKPGIIFGNLISVIGGFLL). At 29–37 (ASKGSIDYP) the chain is on the periplasmic side. The helical transmembrane segment at 38–56 (LFIYTLVGVSLVVASGCVF) threads the bilayer. Residues 57-78 (NNYIDRDIDRKMERTKNRVLVK) lie on the Cytoplasmic side of the membrane. Residues 79 to 97 (GLISPAVSLVYATLLGIAG) form a helical membrane-spanning segment. The Periplasmic portion of the chain corresponds to 98 to 107 (FMLLWFGANP). The chain crosses the membrane as a helical span at residues 108 to 126 (LACWLGVMGFVVYVGVYSL). The Cytoplasmic portion of the chain corresponds to 127–197 (YMKRHSVYGT…YQAANIPVLP (71 aa)). The chain crosses the membrane as a helical span at residues 198-216 (VVKGISVAKNHITLYIIAF). Topologically, residues 217–228 (AVATLMLSLGGY) are periplasmic. A helical transmembrane segment spans residues 229-247 (AGYKYLVVAAAVSVWWLGM). At 248–268 (ALRGYKVADDRIWARKLFGFS) the chain is on the cytoplasmic side. The chain crosses the membrane as a helical span at residues 269-287 (IIAITALSVMMSVDFMVPD). Topologically, residues 288–296 (SHTLLAAVW) are periplasmic.

It belongs to the UbiA prenyltransferase family. Protoheme IX farnesyltransferase subfamily.

Its subcellular location is the cell inner membrane. It catalyses the reaction heme b + (2E,6E)-farnesyl diphosphate + H2O = Fe(II)-heme o + diphosphate. It participates in porphyrin-containing compound metabolism; heme O biosynthesis; heme O from protoheme: step 1/1. Its function is as follows. Converts heme B (protoheme IX) to heme O by substitution of the vinyl group on carbon 2 of heme B porphyrin ring with a hydroxyethyl farnesyl side group. The protein is Protoheme IX farnesyltransferase of Shigella flexneri.